A 1375-amino-acid polypeptide reads, in one-letter code: ARF guanine-nucleotide exchange factor GNL2 (1375 aa).

An SEC7 domain is found at 486–676 (HIRVRKAQKR…SELFQSIATN (191 aa)). E590 is an active-site residue.

In terms of assembly, homodimer. In terms of tissue distribution, preferentially expressed in mature pollen grains and growing pollen tubes.

Its subcellular location is the cytoplasm. It is found in the cytosol. It localises to the membrane. Its function is as follows. Activates the ARF proteins by exchanging bound GDP for free GTP. Plays a role in vesicular protein sorting. Essential for pollen germination. The sequence is that of ARF guanine-nucleotide exchange factor GNL2 (GNL2) from Arabidopsis thaliana (Mouse-ear cress).